A 465-amino-acid polypeptide reads, in one-letter code: Zinc finger CCCH domain-containing protein 58 (465 aa).

Residues 1–26 (MERYGGAGEDESRSDPSHEWSAQGTE) are disordered. 3 C3H1-type zinc fingers span residues 51–79 (RPDE…HPRN), 97–125 (RMGQ…HPRQ), and 145–173 (RPGE…HPVP). Disordered stretches follow at residues 173-200 (PPGV…LQSQ) and 274-302 (LSPS…QRPE). Over residues 177–191 (QAPSQQQQQQLSAGP) the composition is skewed to low complexity. The span at 283-298 (SGPSSTGVSNKEQTFP) shows a compositional bias: polar residues. C3H1-type zinc fingers lie at residues 300–328 (RPEQ…HPME) and 345–373 (RPGA…HSLG). The segment covering 397-431 (SLGTLAPSSSSDQCTELISSSSIEPITTTTGGSET) has biased composition (low complexity). Positions 397–465 (SLGTLAPSSS…SASNEAKTSS (69 aa)) are disordered. Positions 444–453 (SHPEPAETNK) are enriched in basic and acidic residues. Polar residues predominate over residues 454–465 (GDSASNEAKTSS).

The protein localises to the nucleus. The polypeptide is Zinc finger CCCH domain-containing protein 58 (Arabidopsis thaliana (Mouse-ear cress)).